The primary structure comprises 254 residues: Nickel import ATP-binding protein NikO (254 aa).

The ABC transporter domain maps to 5–246 (FELQGVQFAY…TALLRRARLL (242 aa)). 37-44 (GANGSGKS) lines the ATP pocket.

The protein belongs to the ABC transporter superfamily. Forms an energy-coupling factor (ECF) transporter complex composed of an ATP-binding protein (A component, NikO), a transmembrane protein (T component, NikQ) and a fused possible substrate-capture protein (S component, NikMN) of unknown stoichimetry.

Its subcellular location is the cell inner membrane. The catalysed reaction is Ni(2+)(out) + ATP + H2O = Ni(2+)(in) + ADP + phosphate + H(+). In terms of biological role, part of the energy-coupling factor (ECF) transporter complex NikMNQO involved in nickel import. The complex confers nickel uptake upon expression in E.coli. Shows very low activity with cobalt. Presumably responsible for energy coupling to the transport system. This is Nickel import ATP-binding protein NikO from Rhodobacter capsulatus (strain ATCC BAA-309 / NBRC 16581 / SB1003).